A 526-amino-acid polypeptide reads, in one-letter code: Peptide chain release factor 3 (526 aa).

In terms of domain architecture, tr-type G spans S11–L277. GTP contacts are provided by residues S20 to T27, D88 to H92, and N142 to D145.

This sequence belongs to the TRAFAC class translation factor GTPase superfamily. Classic translation factor GTPase family. PrfC subfamily.

It localises to the cytoplasm. Its function is as follows. Increases the formation of ribosomal termination complexes and stimulates activities of RF-1 and RF-2. It binds guanine nucleotides and has strong preference for UGA stop codons. It may interact directly with the ribosome. The stimulation of RF-1 and RF-2 is significantly reduced by GTP and GDP, but not by GMP. The polypeptide is Peptide chain release factor 3 (Buchnera aphidicola subsp. Acyrthosiphon pisum (strain Tuc7)).